Here is a 384-residue protein sequence, read N- to C-terminus: MLASYASDPLKSRGRLYKEIPTSYRNEFERDRDRIIHTNAFRRLQYKTQVFINHEGDHYRNRLTHSLEVSTVARSVASTLNLSNDLAETIALAHDLGHTPFGHAGERALNECMREYNGFSHNAQSLKILTLLEKRYAAYNGVNLTWEVLEGIVKHNGPILGEINEYIAEYNKQNDLELSTYASAEAQIAALADDISYISHDLEDSIGAKIIDFNSLAELKYIDQHVVELKSKFKNISSSCLIYEVVRKLIHELITDLLWQTKENLNKEKITNIDEIRNLNYQIVDFTEKTNKNIKETKKFLHERVYKSNKITAISLKCTKIVQGLFKVYMDDINLLPVNWKMLIDSNETYSKARVIADYIAGMTDRFAIQEYNQLCSTSYITCF.

An HD domain is found at 62-198 (RLTHSLEVST…AALADDISYI (137 aa)).

It belongs to the dGTPase family. Type 2 subfamily.

This is Deoxyguanosinetriphosphate triphosphohydrolase-like protein from Rickettsia rickettsii (strain Iowa).